A 349-amino-acid polypeptide reads, in one-letter code: Protein-glutamate methylesterase/protein-glutamine glutaminase (349 aa).

The Response regulatory domain maps to 2-118; that stretch reads RVLVVDDSAL…VDLSSVAQEL (117 aa). Residue aspartate 52 is modified to 4-aspartylphosphate. A CheB-type methylesterase domain is found at 159–345; sequence VLIGSSTGGP…EEIVRFLEVK (187 aa). Catalysis depends on residues serine 164, histidine 191, and aspartate 287.

The protein belongs to the CheB family. Post-translationally, phosphorylated by CheA. Phosphorylation of the N-terminal regulatory domain activates the methylesterase activity.

The protein resides in the cytoplasm. It carries out the reaction [protein]-L-glutamate 5-O-methyl ester + H2O = L-glutamyl-[protein] + methanol + H(+). The enzyme catalyses L-glutaminyl-[protein] + H2O = L-glutamyl-[protein] + NH4(+). Involved in chemotaxis. Part of a chemotaxis signal transduction system that modulates chemotaxis in response to various stimuli. Catalyzes the demethylation of specific methylglutamate residues introduced into the chemoreceptors (methyl-accepting chemotaxis proteins or MCP) by CheR. Also mediates the irreversible deamidation of specific glutamine residues to glutamic acid. The polypeptide is Protein-glutamate methylesterase/protein-glutamine glutaminase (Archaeoglobus fulgidus (strain ATCC 49558 / DSM 4304 / JCM 9628 / NBRC 100126 / VC-16)).